The chain runs to 115 residues: Large ribosomal subunit protein bL19 (115 aa).

This sequence belongs to the bacterial ribosomal protein bL19 family.

Functionally, this protein is located at the 30S-50S ribosomal subunit interface and may play a role in the structure and function of the aminoacyl-tRNA binding site. This Wigglesworthia glossinidia brevipalpis protein is Large ribosomal subunit protein bL19.